The sequence spans 276 residues: MDPLKLFTGVPKKEYPTAPKTVTPLYPNPMVCRMVLEVNRCENLCVACNSPVLVRDGALCVSQTLDYVKQKLVSDTFMGFTMACLLDCEDLVDSINLAPHVFAQRVFVFRPPNSYLLEMCVLSSMLENCETYTRRFVESLVSRARFIYSKSPCIDACFLLHSIEMMASTIIDYFKLDLEGTQPRYPGLMMYKLHGAIEGGSFESKGLLRPIYHESFKLCSDPDASFDEEEETGEAGVTFNVFYCETIFTKHLRAEAVAKVFKERCLEGFPRHQILS.

Belongs to the herpesviridae cytoplasmic envelopment protein 1 family.

The protein resides in the virion. It localises to the virion tegument. Its subcellular location is the host cytoplasm. The protein localises to the host Golgi apparatus. Its function is as follows. Plays a critical role in cytoplasmic virus egress. Participates in the final step of tegumentation and envelope acquisition within the host cytoplasm. The sequence is that of Cytoplasmic envelopment protein 1 (42) from Equus caballus (Horse).